Reading from the N-terminus, the 220-residue chain is Putative NAD(P)H nitroreductase (220 aa).

155–160 (GASALG) contacts NAD(+).

This sequence belongs to the nitroreductase family. The cofactor is FMN.

This chain is Putative NAD(P)H nitroreductase, found in Haemophilus influenzae (strain ATCC 51907 / DSM 11121 / KW20 / Rd).